The primary structure comprises 514 residues: 1,25-dihydroxyvitamin D(3) 24-hydroxylase, mitochondrial (514 aa).

Residues 1–35 (MSCPIDKRRTLIAFLRRLRDLGQPPRSVTSKASAS) constitute a mitochondrion transit peptide. Cys-462 contacts heme.

This sequence belongs to the cytochrome P450 family. Requires heme as cofactor.

The protein localises to the mitochondrion. The enzyme catalyses calcitriol + 2 reduced [adrenodoxin] + O2 + 2 H(+) = calcitetrol + 2 oxidized [adrenodoxin] + H2O. It carries out the reaction calcitetrol + 2 reduced [adrenodoxin] + O2 + 2 H(+) = (1S)-1,25-dihydroxy-24-oxocalciol + 2 oxidized [adrenodoxin] + 2 H2O. It catalyses the reaction (1S)-1,25-dihydroxy-24-oxocalciol + 2 reduced [adrenodoxin] + O2 + 2 H(+) = (1S)-1,23,25-trihydroxy-24-oxocalciol + 2 oxidized [adrenodoxin] + H2O. The catalysed reaction is (1S)-1,23-dihydroxy-24,25,26,27-tetranorcalciol + 2 reduced [adrenodoxin] + O2 + 2 H(+) = (1S)-1-hydroxy-23-oxo-24,25,26,27-tetranorcalciol + 2 oxidized [adrenodoxin] + 2 H2O. The enzyme catalyses (1S)-1-hydroxy-23-oxo-24,25,26,27-tetranorcalciol + 2 reduced [adrenodoxin] + O2 + H(+) = calcitroate + 2 oxidized [adrenodoxin] + H2O. It carries out the reaction calcidiol + 2 reduced [adrenodoxin] + O2 + 2 H(+) = secalciferol + 2 oxidized [adrenodoxin] + H2O. It catalyses the reaction secalciferol + 2 reduced [adrenodoxin] + O2 + 2 H(+) = 25-hydroxy-24-oxocalciol + 2 oxidized [adrenodoxin] + 2 H2O. The catalysed reaction is 25-hydroxy-24-oxocalciol + 2 reduced [adrenodoxin] + O2 + 2 H(+) = 23S,25-dihydroxy-24-oxocholecalciferol + 2 oxidized [adrenodoxin] + H2O. The enzyme catalyses 20S,23-dihydroxycholecalciferol + 2 reduced [adrenodoxin] + O2 + 2 H(+) = 20S,23,25-trihydroxycholecalciferol + 2 oxidized [adrenodoxin] + H2O. It carries out the reaction 20S,23-dihydroxycholecalciferol + 2 reduced [adrenodoxin] + O2 + 2 H(+) = 20S,23,24-trihydroxycholecalciferol + 2 oxidized [adrenodoxin] + H2O. It catalyses the reaction 20S-hydroxycholecalciferol + 2 reduced [adrenodoxin] + O2 + 2 H(+) = 20S,25-dihydroxycholecalciferol + 2 oxidized [adrenodoxin] + H2O. The catalysed reaction is 20S-hydroxycholecalciferol + 2 reduced [adrenodoxin] + O2 + 2 H(+) = 20S,24S-dihydroxycholecalciferol + 2 oxidized [adrenodoxin] + H2O. The enzyme catalyses 20S-hydroxycholecalciferol + 2 reduced [adrenodoxin] + O2 + 2 H(+) = 20S,24R-dihydroxycholecalciferol + 2 oxidized [adrenodoxin] + H2O. A cytochrome P450 monooxygenase with a key role in vitamin D catabolism and calcium homeostasis. Via C24-oxidation pathway, catalyzes the inactivation of both the vitamin D precursor calcidiol (25-hydroxyvitamin D(3)) and the active hormone calcitriol (1-alpha,25-dihydroxyvitamin D(3)). With initial hydroxylation at C-24 (via C24-oxidation pathway), performs a sequential 6-step oxidation of calcitriol leading to the formation of the biliary metabolite calcitroic acid. Hydroxylates at C-24 or C-25 other vitamin D active metabolites, such as CYP11A1-derived secosteroids 20S-hydroxycholecalciferol and 20S,23-dihydroxycholecalciferol. Mechanistically, uses molecular oxygen inserting one oxygen atom into a substrate, and reducing the second into a water molecule, with two electrons provided by NADPH via FDXR/adrenodoxin reductase and FDX1/adrenodoxin. The polypeptide is 1,25-dihydroxyvitamin D(3) 24-hydroxylase, mitochondrial (Cyp24a1) (Rattus norvegicus (Rat)).